A 131-amino-acid chain; its full sequence is Small ribosomal subunit protein uS8 (131 aa).

The protein belongs to the universal ribosomal protein uS8 family. In terms of assembly, part of the 30S ribosomal subunit. Contacts proteins S5 and S12.

Its function is as follows. One of the primary rRNA binding proteins, it binds directly to 16S rRNA central domain where it helps coordinate assembly of the platform of the 30S subunit. This chain is Small ribosomal subunit protein uS8, found in Dictyoglomus thermophilum (strain ATCC 35947 / DSM 3960 / H-6-12).